We begin with the raw amino-acid sequence, 175 residues long: MSLSRRDPLVVGSVVGDVLDPFTRLVSLKVTYGHREVTNGLDLRPSQVLNKPIVEIGGDDFRNFYTLVMVDPDVPSPSNPHQREYLHWLVTDIPATTGNAFGNEVVCYESPRPPSGIHRIVLVLFRQLGRQTVYAPGWRQQFNTREFAEIYNLGLPVAASYFNCQRENGCGGRRT.

The protein belongs to the phosphatidylethanolamine-binding protein family.

It is found in the cytoplasm. May form complexes with phosphorylated ligands by interfering with kinases and their effectors. The protein is Protein TWIN SISTER of FT (TSF) of Arabidopsis thaliana (Mouse-ear cress).